Here is a 412-residue protein sequence, read N- to C-terminus: 4-hydroxy-3-methylbut-2-en-1-yl diphosphate synthase (ferredoxin) (412 aa).

A compositionally biased stretch (polar residues) spans 1-12 (MQTLDRPNAPSQ). Positions 1–22 (MQTLDRPNAPSQQPYPEPVYPR) are disordered. The [4Fe-4S] cluster site is built by Cys314, Cys317, Cys348, and Glu355.

The protein belongs to the IspG family. [4Fe-4S] cluster serves as cofactor.

The enzyme catalyses (2E)-4-hydroxy-3-methylbut-2-enyl diphosphate + 2 oxidized [2Fe-2S]-[ferredoxin] + H2O = 2-C-methyl-D-erythritol 2,4-cyclic diphosphate + 2 reduced [2Fe-2S]-[ferredoxin] + H(+). The protein operates within isoprenoid biosynthesis; isopentenyl diphosphate biosynthesis via DXP pathway; isopentenyl diphosphate from 1-deoxy-D-xylulose 5-phosphate: step 5/6. Converts 2C-methyl-D-erythritol 2,4-cyclodiphosphate (ME-2,4cPP) into 1-hydroxy-2-methyl-2-(E)-butenyl 4-diphosphate. This is 4-hydroxy-3-methylbut-2-en-1-yl diphosphate synthase (ferredoxin) from Synechococcus sp. (strain JA-3-3Ab) (Cyanobacteria bacterium Yellowstone A-Prime).